We begin with the raw amino-acid sequence, 483 residues long: SWI/SNF-related matrix-associated actin-dependent regulator of chromatin subfamily D member 3 (483 aa).

N-acetylalanine is present on Ala2. A disordered region spans residues 27 to 102 (RPGMPSGARM…ARSRSAKRRK (76 aa)). Residues 78 to 88 (QSQAQGQGQPV) show a composition bias toward low complexity. At Ser178 the chain carries Phosphoserine. The SWIB/MDM2 domain maps to 258–335 (YQPPQFKLDP…PQRLTALLLP (78 aa)).

It belongs to the SMARCD family. In terms of assembly, component of the multiprotein chromatin-remodeling complexes SWI/SNF: SWI/SNF-A (BAF), SWI/SNF-B (PBAF) and related complexes. The canonical complex contains a catalytic subunit (either SMARCA4/BRG1/BAF190A or SMARCA2/BRM/BAF190B) and at least SMARCE1, ACTL6A/BAF53, SMARCC1/BAF155, SMARCC2/BAF170, and SMARCB1/SNF5/BAF47. Other subunits specific to each of the complexes may also be present permitting several possible combinations developmentally and tissue specific. Component of the BAF complex, which includes at least actin (ACTB), ARID1A/BAF250A, ARID1B/BAF250B, SMARCA2/BRM, SMARCA4/BRG1/BAF190A, ACTL6A/BAF53, ACTL6B/BAF53B, SMARCE1/BAF57, SMARCC1/BAF155, SMARCC2/BAF170, SMARCB1/SNF5/INI1, and one or more SMARCD1/BAF60A, SMARCD2/BAF60B, or SMARCD3/BAF60C. In muscle cells, the BAF complex also contains DPF3. Component of neural progenitors-specific chromatin remodeling complex (npBAF complex) composed of at least, ARID1A/BAF250A or ARID1B/BAF250B, SMARCD1/BAF60A, SMARCD3/BAF60C, SMARCA2/BRM/BAF190B, SMARCA4/BRG1/BAF190A, SMARCB1/BAF47, SMARCC1/BAF155, SMARCE1/BAF57, SMARCC2/BAF170, PHF10/BAF45A, ACTL6A/BAF53A and actin. Component of neuron-specific chromatin remodeling complex (nBAF complex) composed of at least, ARID1A/BAF250A or ARID1B/BAF250B, SMARCD1/BAF60A, SMARCD3/BAF60C, SMARCA2/BRM/BAF190B, SMARCA4/BRG1/BAF190A, SMARCB1/BAF47, SMARCC1/BAF155, SMARCE1/BAF57, SMARCC2/BAF170, DPF1/BAF45B, DPF3/BAF45C, ACTL6B/BAF53B and actin. May be a component of the SWI/SNF-B (PBAF) chromatin remodeling complex, at least composed of SMARCA4/BRG1, SMARCB1/BAF47/SNF5, ACTL6A/BAF53A or ACTL6B/BAF53B, SMARCE1/BAF57, SMARCD1/BAF60A, SMARCD2/BAF60B, perhaps SMARCD3/BAF60C, SMARCC1/BAF155, SMARCC2/BAF170, PBRM1/BAF180, ARID2/BAF200 and actin. Component of SWI/SNF (GBAF) subcomplex, which includes at least BICRA or BICRAL (mutually exclusive), BRD9, SS18, SMARCA2/BRM, SMARCA4/BRG1/BAF190A, ACTL6A/BAF53, SMARCC1/BAF155, and SMARCD1/BAF60A. Interacts with SMARCA4/BRG1/BAF190A. The precise distribution of the related SMARCD1, SMARCD2 and SMARCD3 proteins among these and other SWI/SNF nucleosome-remodeling complexes is not fully known. May allow recruitment of SWI/SNF containing complexes specifically to promoters where these factors are located. Also interacts with several nuclear receptors including PPARG/NR1C3, RXRA/NR1F1, ESR1, NR5A1, NR5A2/LRH1 and other transcriptional activators including the HLH protein SREBF1/SREBP1 and the homeobox protein PBX1. Interacts with PRDM1/BLIMP1. As to expression, ubiquitously expressed.

The protein resides in the nucleus. Its function is as follows. Involved in transcriptional activation and repression of select genes by chromatin remodeling (alteration of DNA-nucleosome topology). Component of SWI/SNF chromatin remodeling complexes that carry out key enzymatic activities, changing chromatin structure by altering DNA-histone contacts within a nucleosome in an ATP-dependent manner. Stimulates nuclear receptor mediated transcription. Belongs to the neural progenitors-specific chromatin remodeling complex (npBAF complex) and the neuron-specific chromatin remodeling complex (nBAF complex). During neural development a switch from a stem/progenitor to a postmitotic chromatin remodeling mechanism occurs as neurons exit the cell cycle and become committed to their adult state. The transition from proliferating neural stem/progenitor cells to postmitotic neurons requires a switch in subunit composition of the npBAF and nBAF complexes. As neural progenitors exit mitosis and differentiate into neurons, npBAF complexes which contain ACTL6A/BAF53A and PHF10/BAF45A, are exchanged for homologous alternative ACTL6B/BAF53B and DPF1/BAF45B or DPF3/BAF45C subunits in neuron-specific complexes (nBAF). The npBAF complex is essential for the self-renewal/proliferative capacity of the multipotent neural stem cells. The nBAF complex along with CREST plays a role regulating the activity of genes essential for dendrite growth. This is SWI/SNF-related matrix-associated actin-dependent regulator of chromatin subfamily D member 3 (Smarcd3) from Mus musculus (Mouse).